Here is a 286-residue protein sequence, read N- to C-terminus: 2-hydroxy-6-oxo-6-phenylhexa-2,4-dienoate hydrolase (286 aa).

Residues 36–271 enclose the AB hydrolase-1 domain; sequence VIMLHGGGPG…RCGHWAQWEH (236 aa). Residues 42-43, Asn-51, Asn-111, Ser-180, and Arg-190 contribute to the substrate site; that span reads GG. His-265 serves as the catalytic Proton acceptor. Trp-266 contacts substrate.

The protein belongs to the AB hydrolase superfamily. BphD family. In terms of assembly, homodimer.

It carries out the reaction 2,6-dioxo-6-phenylhexa-3-enoate + H2O = 2-oxopent-4-enoate + benzoate + H(+). It participates in xenobiotic degradation; biphenyl degradation; 2-hydroxy-2,4-pentadienoate and benzoate from biphenyl: step 4/4. Functionally, catalyzes an unusual C-C bond hydrolysis of 2-hydroxy-6-oxo-6-phenylhexa-2,4-dienoic acid (HOPDA) to produce benzoic acid and 2-hydroxy-2,4-pentadienoic acid (HPD). This chain is 2-hydroxy-6-oxo-6-phenylhexa-2,4-dienoate hydrolase, found in Burkholderia cepacia (Pseudomonas cepacia).